The sequence spans 397 residues: Calponin-like protein clik-2 (397 aa).

Calponin-like repeat units lie at residues 29-54 (LSQQAGTNKFETQKGMTAVGMPRWNI), 73-98 (LRVQCGTNQYASQKGETPIGASRFQV), 119-144 (IPKQAGDYGLASQAGEVSMGGHRNQV), 161-189 (LCFQNGTNLFASQTGMSAPPGLGAVRQAT), 209-234 (TPWYSGQNKFATQAGSGGFLKVRDVL), and 255-280 (VPLQSGTNKLASQRGMTGFGTPRNTQ). Residues 301–397 (EETKPPGSAS…EEEEEEEEDE (97 aa)) are disordered. Positions 321 to 332 (KFEERESSRQSE) are enriched in basic and acidic residues. Composition is skewed to acidic residues over residues 344 to 360 (VEPEPEEEEEEEEEEKI) and 367 to 397 (EEEEEEEEEEEEEEEELEEEEEEEEEEEEDE).

The protein belongs to the calponin family. As to expression, expressed in pharyngeal muscle cells (at protein level).

Functionally, required for pharyngeal pumping. The sequence is that of Calponin-like protein clik-2 from Caenorhabditis elegans.